Reading from the N-terminus, the 491-residue chain is Glucose-6-phosphate 1-dehydrogenase (491 aa).

NADP(+) is bound by residues arginine 51 and lysine 150. Substrate-binding residues include histidine 180, lysine 184, glutamate 218, and aspartate 237. Histidine 242 acts as the Proton acceptor in catalysis. Lysine 341 contacts substrate.

Belongs to the glucose-6-phosphate dehydrogenase family.

The enzyme catalyses D-glucose 6-phosphate + NADP(+) = 6-phospho-D-glucono-1,5-lactone + NADPH + H(+). Its pathway is carbohydrate degradation; pentose phosphate pathway; D-ribulose 5-phosphate from D-glucose 6-phosphate (oxidative stage): step 1/3. Catalyzes the oxidation of glucose 6-phosphate to 6-phosphogluconolactone. This chain is Glucose-6-phosphate 1-dehydrogenase, found in Rhizobium meliloti (strain 1021) (Ensifer meliloti).